Reading from the N-terminus, the 195-residue chain is Large ribosomal subunit protein uL5 (195 aa).

The protein belongs to the universal ribosomal protein uL5 family. As to quaternary structure, part of the 50S ribosomal subunit; part of the 5S rRNA/L5/L18/L25 subcomplex. Contacts the 5S rRNA and the P site tRNA. Forms a bridge to the 30S subunit in the 70S ribosome.

This is one of the proteins that bind and probably mediate the attachment of the 5S RNA into the large ribosomal subunit, where it forms part of the central protuberance. In the 70S ribosome it contacts protein S13 of the 30S subunit (bridge B1b), connecting the 2 subunits; this bridge is implicated in subunit movement. Contacts the P site tRNA; the 5S rRNA and some of its associated proteins might help stabilize positioning of ribosome-bound tRNAs. The polypeptide is Large ribosomal subunit protein uL5 (Pelodictyon phaeoclathratiforme (strain DSM 5477 / BU-1)).